Here is a 941-residue protein sequence, read N- to C-terminus: HMG box transcription factor BBX (941 aa).

Residues 1–18 (MKGSNRNKDHSAEGEGVG) are compositionally biased toward basic and acidic residues. 4 disordered regions span residues 1–21 (MKGSNRNKDHSAEGEGVGKRP), 39–80 (FSEE…EQRA), 157–200 (VKSP…FGMA), and 221–242 (TPEVSSGTCRPDVSESPELRQK). 2 stretches are compositionally biased toward acidic residues: residues 39-52 (FSEEEEEEDEEEDI) and 63-75 (LEQDVGETEDDES). The segment at residues 80–148 (ARRPMNAFLL…AFMKANPGYK (69 aa)) is a DNA-binding region (HMG box). The span at 177–191 (SSRDLPSPKKAKTEE) shows a compositional bias: basic and acidic residues. S243 bears the Phosphoserine mark. A coiled-coil region spans residues 326–370 (GRIKELEKGKEEKEIKMEKTDETRLQKEAEFEKSAKENLRDSKEL). Residue K385 forms a Glycyl lysine isopeptide (Lys-Gly) (interchain with G-Cter in SUMO2) linkage. The interval 438 to 482 (IEDPAALNKPEKLKKKKKKSKMDRHGNDKSTPKKTCKKRQSSESD) is disordered. Over residues 449–459 (KLKKKKKKSKM) the composition is skewed to basic residues. Phosphoserine occurs at positions 478 and 485. 2 stretches are compositionally biased toward basic and acidic residues: residues 499–508 (GIEKLGDTPR) and 536–552 (KKMSKEKSSDTTKESRP). Disordered regions lie at residues 499–600 (GIEK…SDCH) and 635–677 (NVDR…KKTK). A Glycyl lysine isopeptide (Lys-Gly) (interchain with G-Cter in SUMO2) cross-link involves residue K573. Positions 661-670 (TFSQSGTSGS) are enriched in low complexity. A Glycyl lysine isopeptide (Lys-Gly) (interchain with G-Cter in SUMO2) cross-link involves residue K696. S704 is subject to Phosphoserine. 3 disordered regions span residues 714-771 (PVPR…DKWS), 803-888 (IPSI…SSTP), and 912-941 (HRGQRSTPLTHDGQPKEMPQAPVLISCADQ). Residues 723–742 (GNVSSEPTKTSKGPFQSQKK) are compositionally biased toward polar residues. Basic residues predominate over residues 743–757 (NLFHKIVSKYKHKKE). The span at 758–771 (KPNVPEKGSGDKWS) shows a compositional bias: basic and acidic residues. Over residues 805–817 (SIFNTPEPTTTQE) the composition is skewed to polar residues. Phosphoserine is present on S822. Basic residues predominate over residues 823–834 (QKRKARKTKITH). S844 bears the Phosphoserine mark. Basic and acidic residues predominate over residues 866–882 (TETDCNDKCSHNTEVGE).

Its subcellular location is the nucleus. In terms of biological role, transcription factor that is necessary for cell cycle progression from G1 to S phase. The protein is HMG box transcription factor BBX (BBX) of Homo sapiens (Human).